The chain runs to 476 residues: Zinc transporter SLC39A7 (476 aa).

Residues 7-27 form a helical membrane-spanning segment; that stretch reads APHWVAVGLLTWAALGLLVAG. Residues 35–109 are compositionally biased toward basic and acidic residues; it reads HKDVEEDFHG…SHGHSHDSLH (75 aa). Residues 35–131 are disordered; it reads HKDVEEDFHG…HGTSREAGAP (97 aa). Histidine 73 is modified (pros-methylhistidine). The span at 110-120 shows a compositional bias: basic residues; that stretch reads HGGHGHAHREH. 3 helical membrane passes run 146–166, 177–197, and 222–242; these read ALGATVLISAAPFFVLFLIPV, LQILLSFASGGLLGDAFLHLI, and GPILSVGLWVLSGIVAFLVVE. The disordered stretch occupies residues 249–320; that stretch reads KGGHGHSHGH…QSPEEEKAGS (72 aa). Residues 257–292 are compositionally biased toward basic and acidic residues; it reads GHGDRHAHGDSHTHGDRHECSSKEKPSTEEEKEVGG. Residue serine 283 is modified to Phosphoserine. Transmembrane regions (helical) follow at residues 393–413 and 417–437; these read VTAIGALAGTACALLTEGGAV and VAGGAGPGWVLPFTAGGFIYV.

Belongs to the ZIP transporter (TC 2.A.5) family. KE4/Catsup subfamily. In terms of assembly, homodimer. In terms of processing, methylation at some His residue by METTL9 leads to reduced zinc-binding. Post-translationally, rapidly phosphorylated by CK2 following Zn(2+) treatment. This phosphorylation is required for efficient cytosolic Zn(2+) release. In terms of tissue distribution, widely expressed. Highly expressed in the intestinal crypts.

The protein localises to the endoplasmic reticulum membrane. It localises to the golgi apparatus. It is found in the cis-Golgi network membrane. It catalyses the reaction Zn(2+)(in) = Zn(2+)(out). In terms of biological role, transports Zn(2+) from the endoplasmic reticulum (ER)/Golgi apparatus to the cytosol, playing an essential role in the regulation of cytosolic zinc levels. Acts as a gatekeeper of zinc release from intracellular stores, requiring post-translational activation by phosphorylation, resulting in activation of multiple downstream pathways leading to cell growth and proliferation. Has an essential role in B cell development and is required for proper B cell receptor signaling. Plays an important role in maintaining intestinal epithelial homeostasis and skin dermis development by regulating ER function. Controls cell signaling pathways involved in glucose metabolism in skeletal muscle. Has a protective role against ER stress in different biological contexts. Mediates Zn(2+)-induced ferroptosis. In Mus musculus (Mouse), this protein is Zinc transporter SLC39A7 (Slc39a7).